The following is a 263-amino-acid chain: 3-methyl-2-oxobutanoate hydroxymethyltransferase (263 aa).

Mg(2+)-binding residues include Asp43 and Asp82. Residues Asp43–Ser44, Asp82, and Lys111 contribute to the 3-methyl-2-oxobutanoate site. Glu113 lines the Mg(2+) pocket. The active-site Proton acceptor is the Glu179.

The protein belongs to the PanB family. As to quaternary structure, homodecamer; pentamer of dimers. The cofactor is Mg(2+).

Its subcellular location is the cytoplasm. The catalysed reaction is 3-methyl-2-oxobutanoate + (6R)-5,10-methylene-5,6,7,8-tetrahydrofolate + H2O = 2-dehydropantoate + (6S)-5,6,7,8-tetrahydrofolate. Its pathway is cofactor biosynthesis; (R)-pantothenate biosynthesis; (R)-pantoate from 3-methyl-2-oxobutanoate: step 1/2. Functionally, catalyzes the reversible reaction in which hydroxymethyl group from 5,10-methylenetetrahydrofolate is transferred onto alpha-ketoisovalerate to form ketopantoate. The chain is 3-methyl-2-oxobutanoate hydroxymethyltransferase from Neisseria meningitidis serogroup B (strain ATCC BAA-335 / MC58).